The following is a 710-amino-acid chain: Prolyl endopeptidase (710 aa).

Met1 carries the N-acetylmethionine modification. Lys157 carries the N6-acetyllysine modification. Active-site charge relay system residues include Ser554, Asp641, and His680.

This sequence belongs to the peptidase S9A family. Monomer. The N-terminus is blocked.

The protein localises to the cytoplasm. The catalysed reaction is Hydrolysis of Pro-|-Xaa &gt;&gt; Ala-|-Xaa in oligopeptides.. Cleaves peptide bonds on the C-terminal side of prolyl residues within peptides that are up to approximately 30 amino acids long. This chain is Prolyl endopeptidase (PREP), found in Homo sapiens (Human).